Consider the following 426-residue polypeptide: C4-dicarboxylate transport protein (426 aa).

Transmembrane regions (helical) follow at residues 8–28 (VLYV…HFYP), 44–64 (LIKM…IAGM), 78–98 (LLYF…ATHV), 148–168 (GEIL…ATAG), 173–193 (VVTG…RIIT), 222–242 (LIGT…GIIA), 297–317 (GYSF…LFIA), and 355–375 (AATL…ILGI).

It belongs to the dicarboxylate/amino acid:cation symporter (DAACS) (TC 2.A.23) family.

It is found in the cell inner membrane. Responsible for the transport of dicarboxylates such as succinate, fumarate, and malate from the periplasm across the membrane. The sequence is that of C4-dicarboxylate transport protein from Paraburkholderia xenovorans (strain LB400).